A 340-amino-acid polypeptide reads, in one-letter code: Phenylalanine--tRNA ligase alpha subunit (340 aa).

Glu255 contacts Mg(2+).

It belongs to the class-II aminoacyl-tRNA synthetase family. Phe-tRNA synthetase alpha subunit type 1 subfamily. In terms of assembly, tetramer of two alpha and two beta subunits. Requires Mg(2+) as cofactor.

It localises to the cytoplasm. The enzyme catalyses tRNA(Phe) + L-phenylalanine + ATP = L-phenylalanyl-tRNA(Phe) + AMP + diphosphate + H(+). The protein is Phenylalanine--tRNA ligase alpha subunit of Desulfitobacterium hafniense (strain DSM 10664 / DCB-2).